The following is a 79-amino-acid chain: Small ribosomal subunit protein bS18 (79 aa).

It belongs to the bacterial ribosomal protein bS18 family. Part of the 30S ribosomal subunit. Forms a tight heterodimer with protein bS6.

Binds as a heterodimer with protein bS6 to the central domain of the 16S rRNA, where it helps stabilize the platform of the 30S subunit. This Enterococcus faecalis (strain ATCC 700802 / V583) protein is Small ribosomal subunit protein bS18.